We begin with the raw amino-acid sequence, 379 residues long: tRNA-specific 2-thiouridylase MnmA (379 aa).

ATP contacts are provided by residues 23–30 and leucine 49; that span reads AMSGGVDS. The Nucleophile role is filled by cysteine 117. Cysteine 117 and cysteine 214 are oxidised to a cystine. Glycine 141 serves as a coordination point for ATP. Residues 163 to 165 are interaction with tRNA; sequence RDQ. Catalysis depends on cysteine 214, which acts as the Cysteine persulfide intermediate.

This sequence belongs to the MnmA/TRMU family.

The protein localises to the cytoplasm. It carries out the reaction S-sulfanyl-L-cysteinyl-[protein] + uridine(34) in tRNA + AH2 + ATP = 2-thiouridine(34) in tRNA + L-cysteinyl-[protein] + A + AMP + diphosphate + H(+). In terms of biological role, catalyzes the 2-thiolation of uridine at the wobble position (U34) of tRNA, leading to the formation of s(2)U34. In Cereibacter sphaeroides (strain ATCC 17029 / ATH 2.4.9) (Rhodobacter sphaeroides), this protein is tRNA-specific 2-thiouridylase MnmA.